Reading from the N-terminus, the 254-residue chain is Proline-rich protein 23A3 (254 aa).

3 disordered regions span residues 1-50 (MLRT…LEAP), 161-196 (ASPPDDQANGNFSSIPGVPSPLSQDQVPGPSTGAEQ), and 212-254 (PFPG…LVYE). A compositionally biased stretch (low complexity) spans 35-50 (EPACPEPLAQPELEAP). Pro residues predominate over residues 214–241 (PGSPLQPLPPSPSRNPQEQLPPCPPCSP). Over residues 243–254 (APRRARKRLVYE) the composition is skewed to basic residues.

Belongs to the PRR23 family.

This is Proline-rich protein 23A3 from Mus musculus (Mouse).